The primary structure comprises 399 residues: Tyrosine--tRNA ligase (399 aa).

A 'HIGH' region motif is present at residues 42-51 (PTAPDLHLGH). The 'KMSKS' region motif lies at 226 to 230 (KMSKS). Lysine 229 lines the ATP pocket. An S4 RNA-binding domain is found at 337–398 (IAIANLLKDA…GKRKFARITV (62 aa)).

It belongs to the class-I aminoacyl-tRNA synthetase family. TyrS type 2 subfamily. As to quaternary structure, homodimer.

Its subcellular location is the cytoplasm. It catalyses the reaction tRNA(Tyr) + L-tyrosine + ATP = L-tyrosyl-tRNA(Tyr) + AMP + diphosphate + H(+). Catalyzes the attachment of tyrosine to tRNA(Tyr) in a two-step reaction: tyrosine is first activated by ATP to form Tyr-AMP and then transferred to the acceptor end of tRNA(Tyr). The protein is Tyrosine--tRNA ligase of Colwellia psychrerythraea (strain 34H / ATCC BAA-681) (Vibrio psychroerythus).